Consider the following 214-residue polypeptide: Ribosomal RNA small subunit methyltransferase G (214 aa).

S-adenosyl-L-methionine is bound by residues Gly-81, Met-86, 132 to 133 (VE), and Arg-147.

Belongs to the methyltransferase superfamily. RNA methyltransferase RsmG family.

The protein resides in the cytoplasm. It carries out the reaction guanosine(527) in 16S rRNA + S-adenosyl-L-methionine = N(7)-methylguanosine(527) in 16S rRNA + S-adenosyl-L-homocysteine. Its function is as follows. Specifically methylates the N7 position of guanine in position 527 of 16S rRNA. The polypeptide is Ribosomal RNA small subunit methyltransferase G (Pseudomonas aeruginosa (strain UCBPP-PA14)).